Here is a 428-residue protein sequence, read N- to C-terminus: Elongation factor 1-alpha (428 aa).

A tr-type G domain is found at 5–215 (KPHINIVFIG…ALDQMPEPPK (211 aa)). A G1 region spans residues 14-21 (GHVDHGKS). Residue 14 to 21 (GHVDHGKS) participates in GTP binding. Ser-21 contacts Mg(2+). Residues 68 to 72 (GITID) form a G2 region. Positions 89 to 92 (DAPG) are G3. GTP is bound by residues 89 to 93 (DAPGH) and 144 to 147 (NKMD). A G4 region spans residues 144–147 (NKMD). A G5 region spans residues 181 to 183 (SAW).

Belongs to the TRAFAC class translation factor GTPase superfamily. Classic translation factor GTPase family. EF-Tu/EF-1A subfamily.

The protein resides in the cytoplasm. The enzyme catalyses GTP + H2O = GDP + phosphate + H(+). GTP hydrolase that promotes the GTP-dependent binding of aminoacyl-tRNA to the A-site of ribosomes during protein biosynthesis. This Thermococcus celer protein is Elongation factor 1-alpha.